The chain runs to 515 residues: Fatty acyl-CoA reductase 1 (515 aa).

Residues 1–465 (MVSIPEYYEG…ARKHLNKLRN (465 aa)) lie on the Cytoplasmic side of the membrane. The segment at 451-507 (SGLPAARKHLNKLRNIRYGFNTILVILIWRIFIARSQMARNIWYFVVSLCYKFLSYF) is necessary and sufficient for PEX19-mediated localization into peroxisome membrane. Residues 466–483 (IRYGFNTILVILIWRIFI) form a helical membrane-spanning segment. The Peroxisomal portion of the chain corresponds to 484–515 (ARSQMARNIWYFVVSLCYKFLSYFRASSTMRY).

Belongs to the fatty acyl-CoA reductase family. Interacts with PEX19; PEX19 mediates the targeting of FAR1 to peroxisomes. Widely expressed. Expressed in all tissues examined. Highest expression seen in preputial gland. Expressed in the brain where large quantities of ether lipids are synthesized.

The protein localises to the peroxisome membrane. It carries out the reaction a long-chain fatty acyl-CoA + 2 NADPH + 2 H(+) = a long-chain primary fatty alcohol + 2 NADP(+) + CoA. The catalysed reaction is hexadecanoyl-CoA + 2 NADPH + 2 H(+) = hexadecan-1-ol + 2 NADP(+) + CoA. The enzyme catalyses octadecanoyl-CoA + 2 NADPH + 2 H(+) = octadecan-1-ol + 2 NADP(+) + CoA. It catalyses the reaction (9Z)-octadecenoyl-CoA + 2 NADPH + 2 H(+) = (9Z)-octadecen-1-ol + 2 NADP(+) + CoA. It carries out the reaction (9Z,12Z)-octadecadienoyl-CoA + 2 NADPH + 2 H(+) = (9Z,12Z)-octadecadien-1-ol + 2 NADP(+) + CoA. The catalysed reaction is eicosanoyl-CoA + 2 NADPH + 2 H(+) = eicosan-1-ol + 2 NADP(+) + CoA. The enzyme catalyses 16-methylheptadecanoyl-CoA + 2 NADPH + 2 H(+) = 16-methylheptadecan-1-ol + 2 NADP(+) + CoA. It catalyses the reaction 18-methylnonadecanoyl-CoA + 2 NADPH + 2 H(+) = 18-methylnonadecan-1-ol + 2 NADP(+) + CoA. Functionally, catalyzes the reduction of saturated and unsaturated C16 or C18 fatty acyl-CoA to fatty alcohols. It plays an essential role in the production of ether lipids/plasmalogens which synthesis requires fatty alcohols. In parallel, it is also required for wax monoesters production since fatty alcohols also constitute a substrate for their synthesis. The sequence is that of Fatty acyl-CoA reductase 1 from Mus musculus (Mouse).